A 292-amino-acid polypeptide reads, in one-letter code: Homeobox-leucine zipper protein HOX19 (292 aa).

3 disordered regions span residues 14–85 (LALG…HSVS), 99–133 (RERA…RLTK), and 217–236 (FAPP…PPAP). Residues 28–74 (TDAAAAHRGGCRRPSPSSQCPPLEPSLTLSLPDDAAAGAAATATATA) show a composition bias toward low complexity. The span at 99 to 109 (RERAEEADGER) shows a compositional bias: basic and acidic residues. The segment at residues 124-183 (STRKKLRLTKEQSALLEDRFREHSTLNPKQKVALAKQLNLRPRQVEVWFQNRRARTKLKQ) is a DNA-binding region (homeobox). The segment at 182–226 (KQTEVDCEFLKRCCETLTEENRRLQRELQELRALKFAPPPPSSAA) is leucine-zipper.

This sequence belongs to the HD-ZIP homeobox family. Class II subfamily. In terms of tissue distribution, expressed in seedlings, roots, stems, leaf sheaths and blades and panicles.

The protein localises to the nucleus. Probable transcription factor. The chain is Homeobox-leucine zipper protein HOX19 (HOX19) from Oryza sativa subsp. japonica (Rice).